Here is an 84-residue protein sequence, read N- to C-terminus: Small ribosomal subunit protein bS20 (84 aa).

The disordered stretch occupies residues 1-28; it reads MPNIKSAIKRVKTADTRNSRNASQRSAM.

Belongs to the bacterial ribosomal protein bS20 family.

Its function is as follows. Binds directly to 16S ribosomal RNA. In Listeria welshimeri serovar 6b (strain ATCC 35897 / DSM 20650 / CCUG 15529 / CIP 8149 / NCTC 11857 / SLCC 5334 / V8), this protein is Small ribosomal subunit protein bS20.